We begin with the raw amino-acid sequence, 362 residues long: Peptide chain release factor 1 (362 aa).

At Gln237 the chain carries N5-methylglutamine.

Belongs to the prokaryotic/mitochondrial release factor family. In terms of processing, methylated by PrmC. Methylation increases the termination efficiency of RF1.

It localises to the cytoplasm. Functionally, peptide chain release factor 1 directs the termination of translation in response to the peptide chain termination codons UAG and UAA. In Legionella pneumophila (strain Paris), this protein is Peptide chain release factor 1.